A 166-amino-acid chain; its full sequence is NADH-quinone oxidoreductase subunit E (166 aa).

Positions 92, 97, 133, and 137 each coordinate [2Fe-2S] cluster.

It belongs to the complex I 24 kDa subunit family. In terms of assembly, composed of 13 different subunits. Subunits NuoCD, E, F, and G constitute the peripheral sector of the complex. Requires [2Fe-2S] cluster as cofactor.

The catalysed reaction is a quinone + NADH + 5 H(+)(in) = a quinol + NAD(+) + 4 H(+)(out). In terms of biological role, NDH-1 shuttles electrons from NADH, via FMN and iron-sulfur (Fe-S) centers, to quinones in the respiratory chain. The immediate electron acceptor for the enzyme in this species is believed to be ubiquinone. Couples the redox reaction to proton translocation (for every two electrons transferred, four hydrogen ions are translocated across the cytoplasmic membrane), and thus conserves the redox energy in a proton gradient. In Salmonella typhi, this protein is NADH-quinone oxidoreductase subunit E (nuoE).